The primary structure comprises 87 residues: Lantipeptide prochlorosin 3.3 (87 aa).

The propeptide occupies 1–64 (MSEEQLKAFI…DEELEAASGG (64 aa)). Thr-67 carries the 2,3-didehydrobutyrine modification. A cross-link (beta-methyllanthionine (Thr-Cys)) is located at residues 75 to 85 (TAGCYGGTKMC). A cross-link (beta-methyllanthionine (Cys-Thr)) is located at residues 78–82 (CYGGT).

In terms of processing, cross-links are proved in vitro, when coepressed in E.coli with the ProcM lanthionine synthetase. Post-translationally, the beta-methyllanthionine residues have a DL configuration (with 2S,3S,6R stereochemistry). Maturation of prochlorosin involves the enzymatic conversion of Thr, and Ser into dehydrated AA and the formation of thioether bonds with cysteines. This is followed by membrane translocation and cleavage of the modified precursor.

It is found in the secreted. In terms of biological role, lanthionine-containing peptide (lantipeptide) with unknown function. Does not show antibiotic activity against Lactococcus lactis 117 and Bacillus subtilis 6633 bacteria. Organisms that produce this peptide live in oligotrophic environments at very dilute concentrations, suggesting this peptide is not secreted to influence other bacteria. In Prochlorococcus marinus (strain MIT 9313), this protein is Lantipeptide prochlorosin 3.3.